Reading from the N-terminus, the 667-residue chain is NADPH--cytochrome P450 reductase (667 aa).

Topologically, residues Met-1 to Asp-8 are lumenal. The chain crosses the membrane as a helical span at residues Phe-9–Gly-29. The Cytoplasmic portion of the chain corresponds to Thr-30–Phe-667. Residues Met-72–Trp-215 form the Flavodoxin-like domain. FMN-binding positions include Leu-164–Asn-173 and Asp-199. An FAD-binding FR-type domain is found at Lys-277 to Pro-511. NADP(+) is bound at residue Arg-297. Residues Thr-468 to Val-470 and Gly-484 to Ser-487 contribute to the FAD site. NADP(+)-binding positions include Thr-527, Ser-586–Arg-587, and Lys-592–Gln-596. Position 666 (Trp-666) interacts with FAD.

It belongs to the NADPH--cytochrome P450 reductase family. This sequence in the N-terminal section; belongs to the flavodoxin family. The protein in the C-terminal section; belongs to the flavoprotein pyridine nucleotide cytochrome reductase family. FAD is required as a cofactor. Requires FMN as cofactor.

The protein resides in the endoplasmic reticulum membrane. It catalyses the reaction 2 oxidized [cytochrome P450] + NADPH = 2 reduced [cytochrome P450] + NADP(+) + H(+). Functionally, this enzyme is required for electron transfer from NADP to cytochrome P450 in microsomes. It can also provide electron transfer to heme oxygenase and cytochrome B5. The chain is NADPH--cytochrome P450 reductase (redB) from Dictyostelium discoideum (Social amoeba).